A 706-amino-acid polypeptide reads, in one-letter code: DNA ligase (706 aa).

NAD(+)-binding positions include 47 to 51 (DSEYD), 96 to 97 (SI), and E133. Catalysis depends on K135, which acts as the N6-AMP-lysine intermediate. 4 residues coordinate NAD(+): R156, E192, K323, and K347. The Zn(2+) site is built by C441, C444, C459, and C465. Positions 624-706 (VAPKPLSGKT…MRLLASAEAE (83 aa)) constitute a BRCT domain.

The protein belongs to the NAD-dependent DNA ligase family. LigA subfamily. Mg(2+) serves as cofactor. Mn(2+) is required as a cofactor.

It catalyses the reaction NAD(+) + (deoxyribonucleotide)n-3'-hydroxyl + 5'-phospho-(deoxyribonucleotide)m = (deoxyribonucleotide)n+m + AMP + beta-nicotinamide D-nucleotide.. In terms of biological role, DNA ligase that catalyzes the formation of phosphodiester linkages between 5'-phosphoryl and 3'-hydroxyl groups in double-stranded DNA using NAD as a coenzyme and as the energy source for the reaction. It is essential for DNA replication and repair of damaged DNA. The polypeptide is DNA ligase (Polaromonas sp. (strain JS666 / ATCC BAA-500)).